The chain runs to 891 residues: Protein kinase kin1 (891 aa).

The segment at Gly-65–Arg-116 is disordered. The region spanning Tyr-125–Met-395 is the Protein kinase domain. ATP-binding positions include Ile-131–Val-139 and Lys-154. Catalysis depends on Asp-266, which acts as the Proton acceptor. The residue at position 528 (Thr-528) is a Phosphothreonine. Disordered regions lie at residues Thr-528–Arg-699, Thr-728–Leu-747, and Thr-805–Asn-841. Low complexity-rich tracts occupy residues Pro-529–Val-538 and His-583–Arg-603. A phosphoserine mark is found at Ser-535 and Ser-536. Polar residues-rich tracts occupy residues Lys-612–Ser-629, Leu-649–Thr-659, Ile-669–Arg-699, Thr-728–Lys-742, and Tyr-820–Tyr-829. The KA1 domain maps to Gly-842–Leu-891.

Belongs to the protein kinase superfamily. Ser/Thr protein kinase family.

It localises to the cytoplasm. The enzyme catalyses L-seryl-[protein] + ATP = O-phospho-L-seryl-[protein] + ADP + H(+). It carries out the reaction L-threonyl-[protein] + ATP = O-phospho-L-threonyl-[protein] + ADP + H(+). In terms of biological role, has a role in establishing the characteristic rod cell shape. Important for cell polarity and is involved in directing growth to the cell ends. This chain is Protein kinase kin1 (kin1), found in Schizosaccharomyces pombe (strain 972 / ATCC 24843) (Fission yeast).